A 182-amino-acid chain; its full sequence is ATP synthase subunit delta (182 aa).

Belongs to the ATPase delta chain family. F-type ATPases have 2 components, F(1) - the catalytic core - and F(0) - the membrane proton channel. F(1) has five subunits: alpha(3), beta(3), gamma(1), delta(1), epsilon(1). F(0) has three main subunits: a(1), b(2) and c(10-14). The alpha and beta chains form an alternating ring which encloses part of the gamma chain. F(1) is attached to F(0) by a central stalk formed by the gamma and epsilon chains, while a peripheral stalk is formed by the delta and b chains.

The protein localises to the cell inner membrane. Its function is as follows. F(1)F(0) ATP synthase produces ATP from ADP in the presence of a proton or sodium gradient. F-type ATPases consist of two structural domains, F(1) containing the extramembraneous catalytic core and F(0) containing the membrane proton channel, linked together by a central stalk and a peripheral stalk. During catalysis, ATP synthesis in the catalytic domain of F(1) is coupled via a rotary mechanism of the central stalk subunits to proton translocation. In terms of biological role, this protein is part of the stalk that links CF(0) to CF(1). It either transmits conformational changes from CF(0) to CF(1) or is implicated in proton conduction. The chain is ATP synthase subunit delta from Sulfurihydrogenibium azorense (strain DSM 15241 / OCM 825 / Az-Fu1).